The sequence spans 643 residues: Inner kinetochore subunit cnp3 (643 aa).

2 disordered regions span residues 55–209 (SIHL…AFPD) and 224–386 (SIKD…QSDS). Composition is skewed to low complexity over residues 85-97 (AASD…SSSD) and 104-125 (DIPS…GSSG). Residues 166–185 (DFSRIKASPDRKKFEPRRST) are compositionally biased toward basic and acidic residues. 3 stretches are compositionally biased toward polar residues: residues 235-261 (YIQT…PSKQ), 295-304 (LNRSLANNSQ), and 313-322 (KPLQESSINS). Basic residues-rich tracts occupy residues 332–341 (VKRKRGRPRK) and 360–370 (GAKKPAIRNAK). The a.T hook DNA-binding region spans 333–345 (KRKRGRPRKNKLE).

This sequence belongs to the CENP-C/MIF2 family. Component of the inner kinetochore constitutive centromere-associated network (CCAN) (also known as central kinetochore Sim4 complex in fission yeast), which is composed of at least cnl2, cnp3, cnp20, fta1, fta2, fta3, fta4, fta6, fta7, mal2, mhf1, mhf2, mis6, mis15, mis17, sim4 and wip1.

The protein localises to the nucleus. Its subcellular location is the nucleoplasm. Its function is as follows. Component of the kinetochore, a multiprotein complex that assembles on centromeric DNA and attaches chromosomes to spindle microtubules, mediating chromosome segregation and sister chromatid segregation during meiosis and mitosis. Component of the inner kinetochore constitutive centromere-associated network (CCAN), which serves as a structural platform for outer kinetochore assembly. In Schizosaccharomyces pombe (strain 972 / ATCC 24843) (Fission yeast), this protein is Inner kinetochore subunit cnp3 (cnp3).